Consider the following 62-residue polypeptide: Large ribosomal subunit protein bL28 (62 aa).

Belongs to the bacterial ribosomal protein bL28 family.

The sequence is that of Large ribosomal subunit protein bL28 from Streptococcus agalactiae serotype Ia (strain ATCC 27591 / A909 / CDC SS700).